The following is a 251-amino-acid chain: Probable transcriptional regulatory protein Cgl1663/cg1872 (251 aa).

Residues 1-22 (MSGHSKWATTKHKKAANDAKRG) form a disordered region.

It belongs to the TACO1 family.

It localises to the cytoplasm. This is Probable transcriptional regulatory protein Cgl1663/cg1872 from Corynebacterium glutamicum (strain ATCC 13032 / DSM 20300 / JCM 1318 / BCRC 11384 / CCUG 27702 / LMG 3730 / NBRC 12168 / NCIMB 10025 / NRRL B-2784 / 534).